The chain runs to 837 residues: MSFVIAAPEVIAAAATDLASLESSIAAANAAAAANTTALLAAGADEVSTAVAALFGAHGQAYQALSAQAQAFHAQFVQALTSGGGAYAAAEAAATSPLLAPINEFFLANTGRPLIGNGTNGAPGTGANGGDGGWLIGNGGAGGSGAAGVNGGAGGNGGAGGLIGNGGAGGAGGRASTGTGGAGGAGGAAGMLFGAAGVGGPGGFAAAFGATGGAGGAGGNGGLFADGGVGGAGGATDAGTGGAGGSGGNGGLFGAGGTGGPGGFGIFGGGAGGDGGSGGLFGAGGTGGSGGTSIINVGGNGGAGGDAGMLSLGAAGGAGGSGGSNPDGGGGAGGIGGDGGTLFGSGGAGGVCGLGFDAGGAGGAGGKAGLLIGAGGAGGAGGGSFAGAGGTGGAGGAPGLVGNAGNGGNGGASANGAGAAGGAGGSGVLIGNGGNGGSGGTGAPAGTAGAGGLGGQLLGRDGFNAPASTPLHTLQQQILNAINEPTQALTGRPLIGNGANGTPGTGADGGAGGWLFGNGGNGGHGATGADGGDGGSGGAGGILSGIGGTGGSGGIGTTGQGGTGGTGGAALLIGSGGTGGSGGFGLDTGGAGGRGGDAGLFLGAAGTGGQAALSQNFIGAGGTAGAGGTGGLFANGGAGGAGGFGANGGTGGNGLLFGAGGTGGAGTLGADGGAGGHGGLFGAGGTGGAGGSSGGTFGGNGGSGGNAGLLALGASGGAGGSGGSALNVGGTGGVGGNGGSGGSLFGFGGAGGTGGSSGIGSSGGTGGDGGTAGVFGNGGDGGAGGFGADTGGNSSSVPNAVLIGNGGNGGNGGKAGGTPGAGGTSGLIIGENGLNGL.

In terms of domain architecture, PE spans 4 to 94; sequence VIAAPEVIAA…GAYAAAEAAA (91 aa). Residues 811-825 are compositionally biased toward gly residues; sequence NGGKAGGTPGAGGTS. Residues 811 to 837 form a disordered region; the sequence is NGGKAGGTPGAGGTSGLIIGENGLNGL. Residues 826–837 show a composition bias toward low complexity; sequence GLIIGENGLNGL.

This sequence belongs to the mycobacterial PE family. PGRS subfamily.

The chain is PE-PGRS family protein PE_PGRS4 from Mycobacterium tuberculosis (strain ATCC 25618 / H37Rv).